The sequence spans 994 residues: Chloride channel protein 1 (994 aa).

Residues 1 to 118 (MERSQSQQHG…VLRRKLGEDW (118 aa)) lie on the Cytoplasmic side of the membrane. The disordered stretch occupies residues 37-61 (SENGGLQHRPRKDLGPRHNAHPTQI). Residues 119 to 150 (IFLVLLGLLMALVSWCMDYVSAKSLQAYKWTY) traverse the membrane as a helical segment. Topologically, residues 151–158 (AQMQPSLP) are extracellular. A helical transmembrane segment spans residues 159–179 (LQYLAWVTFPLILILFSALFC). Residues 180–183 (QLIS) lie on the Cytoplasmic side of the membrane. Positions 184 to 189 (PQAVGS) form an intramembrane region, note=Loop between two helices. Residues 188–192 (GSGIP) carry the Selectivity filter part_1 motif. Ser-189 is a chloride binding site. Positions 190 to 195 (GIPEMK) form an intramembrane region, helical. The Cytoplasmic segment spans residues 196 to 208 (TILRGVVLKEYLT). The helical intramembrane region spans 209 to 224 (LKAFVAKVVALTAGLG). The segment at residues 225–230 (SGIPVG) is an intramembrane region (note=Loop between two helices). A Selectivity filter part_2 motif is present at residues 230–234 (GKEGP). An intramembrane region (helical) is located at residues 231-246 (KEGPFVHIASICAAVL). Topologically, residues 247–268 (SKFMSMFSGVYEQPYYYTDILT) are cytoplasmic. 2 intramembrane regions (helical) span residues 269-280 (VGCAVGVGCCFG) and 281-290 (TPLGGVLFSI). Topologically, residues 291–301 (EVTSTYFAVRN) are cytoplasmic. The chain crosses the membrane as a helical span at residues 302-321 (YWRGFFAATFSAFVFRVLAV). Over 322–347 (WNKDAVTITALFRTNFRMDFPFDLKE) the chain is Extracellular. A helical transmembrane segment spans residues 348–376 (LPAFAVIGICCGFLGAVFVYLHRQVMLGV). The Cytoplasmic segment spans residues 377 to 390 (RKHKALSQFLAKHR). The helical transmembrane segment at 391–408 (LLYPGIVTFVIASLTFPP) threads the bilayer. Residues 409 to 414 (GMGQFM) are Extracellular-facing. The note=Loop between two helices intramembrane region spans 415–418 (AGEL). An intramembrane region (helical) is located at residues 419–426 (MPREAIST). Residues 427-457 (LFDNNTWVKHIGDPKSLGQSAVWIHPQVNVV) are Extracellular-facing. Positions 458–475 (IIILLFFVMKFWMSIVAT) form an intramembrane region, helical. Positions 476-482 (TMPIPCG) form an intramembrane region, note=Loop between two helices. The Selectivity filter part_3 signature appears at 482–486 (GGFMP). Residues 483–498 (GFMPVFVLGAAFGRLV) constitute an intramembrane region (helical). Phe-484 is a chloride binding site. The Extracellular segment spans residues 499–521 (GEIMAMLFPEGILFDDIIYKILP). Residues 522–538 (GGYAVIGAAALTGAVSH) constitute an intramembrane region (helical). Residues 539–540 (TV) constitute an intramembrane region (note=Loop between two helices). Positions 541–554 (STAVICFELTGQIA) form an intramembrane region, helical. Topologically, residues 555–557 (HIL) are extracellular. Residues 558 to 571 (PMMVAVILANMVAQ) constitute an intramembrane region (helical). The segment at residues 572–575 (SLQP) is an intramembrane region (note=Loop between two helices). The segment at residues 576 to 578 (SLY) is an intramembrane region (helical). Tyr-578 is a chloride binding site. Over 579–994 (DSIIQVKKLP…DEEDEDELIL (416 aa)) the chain is Cytoplasmic. The 60-residue stretch at 609–668 (MVRDVKFVSASCTYGELRNLLQTTTVKTLPLVDSKDSMILLGSVERSELQSLLQRHLCAE) folds into the CBS 1 domain. 3 disordered regions span residues 710-769 (EDED…SADQ), 880-923 (TKSG…DGAP), and 965-994 (NLGPEEDLADILHGPSLRSTDEEDEDELIL). Residues 725–741 (TPTPPPPPPPPLPPQFP) are compositionally biased toward pro residues. The CBS 2 domain maps to 827 to 882 (IDQSPFQLVEQTTLHKTHTLFSLLGLHLAYVTSMGKLRGVLALEELQKAIKGHTKS). Ser-892 is modified (phosphoserine). The span at 985-994 (DEEDEDELIL) shows a compositional bias: acidic residues.

The protein belongs to the chloride channel (TC 2.A.49) family. ClC-1/CLCN1 subfamily. Homodimer. As to expression, predominantly expressed in skeletal muscles.

Its subcellular location is the cell membrane. It is found in the sarcolemma. The protein resides in the T-tubule. It catalyses the reaction chloride(in) = chloride(out). The catalysed reaction is bromide(in) = bromide(out). The enzyme catalyses iodide(out) = iodide(in). It carries out the reaction thiocyanate(in) = thiocyanate(out). It catalyses the reaction nitrate(in) = nitrate(out). Its activity is regulated as follows. Modulated by membrane voltage with depolarization favouring channel opening and hyperpolarization favouring channel closure. Inhibited by acidic pH and ATP binding due to a shift of voltage dependence of common gating to more positive voltages. Inhibited by 9-anthracene-carboxylic acid. Voltage-gated chloride channel involved in skeletal muscle excitability. Generates most of the plasma membrane chloride conductance in skeletal muscle fibers, stabilizes the resting membrane potential and contributes to the repolarization phase during action potential firing. Forms a homodimeric channel where each subunit has its own ion conduction pathway. Conducts double-barreled currents controlled by two types of gates, two fast glutamate gates that control each subunit independently and a slow common gate that opens and shuts off both subunits simultaneously. Has a significant open probability at muscle resting potential and is further activated upon membrane depolarization. Permeable to small monovalent anions with ion selectivity for chloride &gt; thiocyanate &gt; bromide &gt; nitrate &gt; iodide. In Rattus norvegicus (Rat), this protein is Chloride channel protein 1 (Clcn1).